The sequence spans 1294 residues: Unconventional myosin-VI (1294 aa).

The Myosin N-terminal SH3-like domain maps to 2–53 (EDGKPVWAPHPTDGFQMGNIVDIGPDSLTIEPLNQKGKTFLALINQVFPAEE). Positions 57 to 771 (KDVEDNCSLM…KFAEFDQIMK (715 aa)) constitute a Myosin motor domain. 151 to 158 (GESGAGKT) contributes to the ATP binding site. Phosphoserine is present on Ser267. Residues 273–317 (YLNRGCTRYFANKETDKQILQNRKSPEYLKAGSMKDPLLDDHGDF) are responsible for slow ATPase activity. Thr405 carries the phosphothreonine modification. Ser604 is modified (phosphoserine). The segment at 665 to 672 (FIRCIKPN) is actin-binding. The required for binding calmodulin stretch occupies residues 782-810 (KRVNHWLTCSRWKKVQWCSLSVIKLKNKI). The 21-residue stretch at 814–834 (AEACIKMQKTIRMWLCKRRHK) folds into the IQ domain. Residues 835–916 (PRIDGLVKVG…EELLSALQKK (82 aa)) are three-helix bundle. The segment at 917–984 (KQQEEEAERL…EDDEKRIQAE (68 aa)) is SAH. Residues 934–955 (EKERKRREEDEKRRRKEEEERR) form a disordered region. Phosphoserine is present on Ser1025. The interaction with TAX1BP1 and CALCOCO2/NDP52 stretch occupies residues 1060-1285 (KEMSEFLSRG…ESRQARPTYA (226 aa)). The segment at 1116–1118 (RRL) is interaction with OPTN. The residue at position 1155 (Ser1155) is a Phosphoserine. Positions 1157 to 1285 (QQNPAAQIPA…ESRQARPTYA (129 aa)) are interaction with TOM1.

It belongs to the TRAFAC class myosin-kinesin ATPase superfamily. Myosin family. In terms of assembly, homodimer; dimerization seems to implicate the unfolding of the three-helix bundle region creating an additional calmodulin binding site, and cargo binding. Able to function as a monomer under specific conditions in vitro. Forms a complex with CFTR and DAB2 in the apical membrane of epithelial cells. Component of the DISP/DOCK7-induced septin displacement complex, at least composed of DOCK7, LRCH3 and MYO6. Binding to calmodulin through a unique insert, not found in other myosins, located in the neck region between the motor domain and the IQ domain appears to contribute to the directionality reversal. This interaction occurs only if the C-terminal lobe of calmodulin is occupied by calcium. Interaction with F-actin/ACTN1 occurs only at the apical brush border domain of the proximal tubule cells. Interacts with DAB2. In vitro, the C-terminal globular tail binds a C-terminal region of DAB2. Interacts with CFTR. Interacts with CABP5. Interacts with TOM1. Interacts with OPTN. Interacts with TAX1BP1 and CALCOCO2/NDP52. Interacts with TOM1L2. Interacts with CLIC5; may work together in a complex which also includes RDX and MYO6 to stabilize linkages between the plasma membrane and subjacent actin cytoskeleton at the base of stereocilia. In terms of processing, phosphorylation in the motor domain, induced by EGF, results in translocation of MYO6 from the cell surface to membrane ruffles and affects F-actin dynamics. Phosphorylated in vitro by p21-activated kinase (PAK). Expressed in most tissues examined including heart, brain, placenta, pancreas, spleen, thymus, prostate, testis, ovary, small intestine and colon. Highest levels in brain, pancreas, testis and small intestine. Also expressed in fetal brain and cochlea. Isoform 1 and isoform 2, containing the small insert, and isoform 4, containing neither insert, are expressed in unpolarized epithelial cells.

It localises to the golgi apparatus. It is found in the trans-Golgi network membrane. Its subcellular location is the nucleus. The protein resides in the cytoplasm. The protein localises to the perinuclear region. It localises to the membrane. It is found in the clathrin-coated pit. Its subcellular location is the cytoplasmic vesicle. The protein resides in the clathrin-coated vesicle. The protein localises to the cell projection. It localises to the filopodium. It is found in the ruffle membrane. Its subcellular location is the microvillus. The protein resides in the cytosol. The protein localises to the autophagosome. It localises to the endosome. It is found in the clathrin-coated vesicle membrane. Myosins are actin-based motor molecules with ATPase activity. Unconventional myosins serve in intracellular movements. Myosin 6 is a reverse-direction motor protein that moves towards the minus-end of actin filaments. Has slow rate of actin-activated ADP release due to weak ATP binding. Functions in a variety of intracellular processes such as vesicular membrane trafficking and cell migration. Required for the structural integrity of the Golgi apparatus via the p53-dependent pro-survival pathway. Appears to be involved in a very early step of clathrin-mediated endocytosis in polarized epithelial cells. Together with TOM1, mediates delivery of endocytic cargo to autophagosomes thereby promoting autophagosome maturation and driving fusion with lysosomes. Links TOM1 with autophagy receptors, such as TAX1BP1; CALCOCO2/NDP52 and OPTN. May act as a regulator of F-actin dynamics. As part of the DISP complex, may regulate the association of septins with actin and thereby regulate the actin cytoskeleton. May play a role in transporting DAB2 from the plasma membrane to specific cellular targets. May play a role in the extension and network organization of neurites. Required for structural integrity of inner ear hair cells. Required for the correct localization of CLIC5 and RDX at the stereocilium base. Modulates RNA polymerase II-dependent transcription. In Homo sapiens (Human), this protein is Unconventional myosin-VI.